Consider the following 471-residue polypeptide: V-type ATP synthase beta chain (471 aa).

Belongs to the ATPase alpha/beta chains family.

Functionally, produces ATP from ADP in the presence of a proton gradient across the membrane. The V-type beta chain is a regulatory subunit. The protein is V-type ATP synthase beta chain (atpB) of Deinococcus radiodurans (strain ATCC 13939 / DSM 20539 / JCM 16871 / CCUG 27074 / LMG 4051 / NBRC 15346 / NCIMB 9279 / VKM B-1422 / R1).